We begin with the raw amino-acid sequence, 518 residues long: Sensor protein kinase HptS (518 aa).

2 helical membrane-spanning segments follow: residues 20-40 and 222-242; these read IFPV…IYIW and GITL…FGFI. The region spanning 297-513 is the Histidine kinase domain; it reads EQLIHSIEHT…LICYKIPLSR (217 aa). At His-325 the chain carries Phosphohistidine; by autocatalysis.

In terms of processing, autophosphorylated.

It is found in the cell membrane. The catalysed reaction is ATP + protein L-histidine = ADP + protein N-phospho-L-histidine.. Its function is as follows. Member of the two-component regulatory system HptS/HptR that regulates genes involved in hexose phosphate transport system in response to changes in extracellular phosphate sources. May act as a sensor protein kinase which is autophosphorylated at a histidine residue and transfers its phosphate group to the conserved aspartic acid residue in the regulatory domain of HptS. In turn, HptS antagonizes CcpA-dependent transcription of a subset of CcpA-regulated genes involved in antibiotic susceptibility. The protein is Sensor protein kinase HptS (hptS) of Staphylococcus aureus (strain MRSA252).